The sequence spans 203 residues: Endo-type membrane-bound lytic murein transglycosylase A (203 aa).

The first 15 residues, 1-15 (MKLRWFAFLIVLLAG), serve as a signal peptide directing secretion. C16 is lipidated: N-palmitoyl cysteine. The S-diacylglycerol cysteine moiety is linked to residue C16.

The protein belongs to the transglycosylase Slt family.

It is found in the cell outer membrane. It carries out the reaction Endolytic cleavage of the (1-&gt;4)-beta-glycosidic linkage between N-acetylmuramic acid (MurNAc) and N-acetylglucosamine (GlcNAc) residues in peptidoglycan with concomitant formation of a 1,6-anhydrobond in the MurNAc residue.. Functionally, murein-degrading enzyme. May play a role in recycling of muropeptides during cell elongation and/or cell division. Preferentially cleaves at a distance of more than two disaccharide units from the ends of the glycan chain. The sequence is that of Endo-type membrane-bound lytic murein transglycosylase A from Escherichia coli O127:H6 (strain E2348/69 / EPEC).